Consider the following 281-residue polypeptide: MIEITKRTISFFKNLTFIKQIDKDTVSDSNNSRFEFIQKEETLAVEMPVALVYNGISHTVMMATPSNLEDFALGFSLAEGVIDRVSDIYGIDVEETCNGVEVQVELATRCFVRLKDLRRTLTGRTGCGICGSEQLEQVTKKLAKLDRTFCFELKKLDGCLALLQQAQTLGKQTGSTHAVGFFSPQGELLAIREDVGRHVALDKLLGWHAKQGKPQGFVLTTSRASYEMVQKTASCGIEMLIAISAATDLAVRMAEECNLTLIGFAREGRATVYTEKVRLKI.

The active-site Cysteine persulfide intermediate is the Cys-127. 264-269 provides a ligand contact to Mo-bis(molybdopterin guanine dinucleotide); it reads FAREGR.

Belongs to the FdhD family.

Its subcellular location is the cytoplasm. Required for formate dehydrogenase (FDH) activity. Acts as a sulfur carrier protein that transfers sulfur from IscS to the molybdenum cofactor prior to its insertion into FDH. The chain is Sulfur carrier protein FdhD from Mannheimia succiniciproducens (strain KCTC 0769BP / MBEL55E).